The following is a 323-amino-acid chain: Transcription factor MafB (323 aa).

Residue K32 forms a Glycyl lysine isopeptide (Lys-Gly) (interchain with G-Cter in SUMO) linkage. The segment covering 34–43 (EPLGRAERPG) has biased composition (basic and acidic residues). Disordered regions lie at residues 34 to 78 (EPLG…PTEP) and 116 to 210 (PVPQ…VEDR). The segment covering 54 to 77 (SVSSTPLSTPCSSVPSSPSFSPTE) has biased composition (low complexity). Basic residues-rich tracts occupy residues 129–143 (SAHH…HPHH) and 159–168 (AHPHHHHHHQ). Positions 192-201 (PHATAAATAA) are enriched in low complexity. Residues 238–263 (RLKQKRRTLKNRGYAQSCRYKRVQQK) are basic motif. A bZIP domain is found at 238–301 (RLKQKRRTLK…DAYKVKCEKL (64 aa)). The segment at 266–287 (LENEKTQLIQQVEQLKQEVSRL) is leucine-zipper. A Glycyl lysine isopeptide (Lys-Gly) (interchain with G-Cter in SUMO) cross-link involves residue K297.

It belongs to the bZIP family. Maf subfamily. In terms of assembly, homodimer or heterodimer with other bHLH-Zip transcription factors. Forms homodimers and heterodimers with FOS, FOSB and FOSL2, but not with JUN proteins (JUN, JUNB and JUND). Interacts with the intracellular cytoplasmic domain of LRP1 (LRPICD); the interaction results in a moderate reduction of MAFB transcriptional potential. Binds DNA as a homodimer or a heterodimer. Interacts with PAX6; the interaction is direct. Interacts with ETS1 and LRP1. Sumoylated. Sumoylation on Lys-32 and Lys-297 stimulates its transcriptional repression activity and promotes macrophage differentiation from myeloid progenitors. In terms of tissue distribution, expressed in pancreatic alpha-cells (glucagon-positive cells), in podocytes of the kidney and macrophages (at protein level). Most abundant in kidney, gut, lung and brain.

Its subcellular location is the nucleus. Acts as a transcriptional activator or repressor. Plays a pivotal role in regulating lineage-specific hematopoiesis by repressing ETS1-mediated transcription of erythroid-specific genes in myeloid cells. Required for monocytic, macrophage, osteoclast, podocyte and islet beta cell differentiation. Involved in renal tubule survival and F4/80 maturation. Activates the insulin and glucagon promoters. Together with PAX6, transactivates weakly the glucagon gene promoter through the G1 element. SUMO modification controls its transcriptional activity and ability to specify macrophage fate. Binds element G1 on the glucagon promoter. Involved either as an oncogene or as a tumor suppressor, depending on the cell context. Required for the transcriptional activation of HOXB3 in the rhombomere r5 in the hindbrain. The polypeptide is Transcription factor MafB (Mafb) (Mus musculus (Mouse)).